The sequence spans 396 residues: MAKGKFERTKPHVNVGTIGHVDHGKTTLTAAITTVLTQKFGGEAKAYDQIDAAPEEKARGITINTAHVEYETANRHYAHVDCPGHADYVKNMITGAAQMDGAILVCSAADGPMPQTREHILLARQVGVPYIIVFLNKCDMVDDAELLELVEMEVRELLSKYDFPGDETPIIKGSAKLALEGDKGELGEVAIMNLADALDTYIPTPERAVDGAFLMPVEDVFSISGRGTVVTGRVERGVVKVGEEIEIVGIKPTVKTTCTGVEMFRKLLDQGQAGDNVGILLRGTKREDVERGQVLAKPGSINPHTHFTAEVYVLSKDEGGRHTPFFNNYRPQFYFRTTDVTGSIELPKDKEMVMPGDNVSITVKLINPIAMEEGLRFAIREGGRTVGAGVVAKILE.

The region spanning 10 to 206 (KPHVNVGTIG…ALDTYIPTPE (197 aa)) is the tr-type G domain. Positions 19–26 (GHVDHGKT) are G1. Position 19–26 (19–26 (GHVDHGKT)) interacts with GTP. Residue threonine 26 coordinates Mg(2+). A G2 region spans residues 60–64 (GITIN). A G3 region spans residues 81–84 (DCPG). GTP-binding positions include 81 to 85 (DCPGH) and 136 to 139 (NKCD). The G4 stretch occupies residues 136–139 (NKCD). The segment at 174–176 (SAK) is G5.

Belongs to the TRAFAC class translation factor GTPase superfamily. Classic translation factor GTPase family. EF-Tu/EF-1A subfamily. Monomer.

Its subcellular location is the cytoplasm. It catalyses the reaction GTP + H2O = GDP + phosphate + H(+). In terms of biological role, GTP hydrolase that promotes the GTP-dependent binding of aminoacyl-tRNA to the A-site of ribosomes during protein biosynthesis. This is Elongation factor Tu from Paraburkholderia xenovorans (strain LB400).